Consider the following 545-residue polypeptide: Membrane protein insertase YidC (545 aa).

6 helical membrane passes run 10–30, 319–339, 341–361, 407–427, 467–487, and 502–522; these read AIYLSLFFIGIFMIIDDIFFS, LLYFIQVPMQLIMQIFYNVIP, WGLSIMFLTIVVRILIFPLTF, LGGCFPILLQLPVFFALYGLV, ILPFIMMVTQLISTIISSNVS, and MPIMFFFILYDMPSGLLIYWI.

It belongs to the OXA1/ALB3/YidC family. Type 1 subfamily. As to quaternary structure, interacts with the Sec translocase complex via SecD. Specifically interacts with transmembrane segments of nascent integral membrane proteins during membrane integration.

Its subcellular location is the cell inner membrane. Its function is as follows. Required for the insertion and/or proper folding and/or complex formation of integral membrane proteins into the membrane. Involved in integration of membrane proteins that insert both dependently and independently of the Sec translocase complex, as well as at least some lipoproteins. Aids folding of multispanning membrane proteins. The polypeptide is Membrane protein insertase YidC (Borrelia hermsii (strain HS1 / DAH)).